The primary structure comprises 126 residues: 13 kDa ribonucleoprotein-associated protein (126 aa).

It belongs to the eukaryotic ribosomal protein eL8 family. Component of the U3 snoRNP particle. Binds to the C'/D and B/C motifs in U3 snoRNA. Component of the 25S U4/U6.U5 tri-snRNP particle, a subcomplex of the spliceosome. Binds to the 5' stem-loop of U4 snRNA.

Its subcellular location is the nucleus. The protein localises to the nucleolus. Common component of the spliceosome and rRNA processing machinery. In association with the spliceosomal U4/U6.U5 tri-snRNP particle, required for splicing of pre-mRNA. In association with box C/D snoRNPs, required for processing of pre-ribosomal RNA (rRNA) and site-specific 2'-O-methylation of substrate RNAs. Essential for the accumulation and stability of U4 snRNA, U6 snRNA, and box C/D snoRNAs. The chain is 13 kDa ribonucleoprotein-associated protein (SNU13) from Mycosarcoma maydis (Corn smut fungus).